A 1143-amino-acid polypeptide reads, in one-letter code: ATP-dependent helicase/deoxyribonuclease subunit B (1143 aa).

The UvrD-like helicase ATP-binding domain maps to 1 to 274; it reads MNYMHLGRAG…YGQTVKFQST (274 aa). An ATP-binding site is contributed by 7 to 14; the sequence is GRAGTGKT. One can recognise a UvrD-like helicase C-terminal domain in the interval 267 to 565; it reads QTVKFQSTGL…RFSLVPPSLD (299 aa). [4Fe-4S] cluster is bound by residues Cys-782, Cys-1104, Cys-1107, and Cys-1113.

It belongs to the helicase family. AddB/RexB type 1 subfamily. Heterodimer of AddA and AddB. It depends on Mg(2+) as a cofactor. The cofactor is [4Fe-4S] cluster.

The heterodimer acts as both an ATP-dependent DNA helicase and an ATP-dependent, dual-direction single-stranded exonuclease. Recognizes the chi site generating a DNA molecule suitable for the initiation of homologous recombination. The AddB subunit has 5' -&gt; 3' nuclease activity but not helicase activity. This chain is ATP-dependent helicase/deoxyribonuclease subunit B, found in Exiguobacterium sibiricum (strain DSM 17290 / CCUG 55495 / CIP 109462 / JCM 13490 / 255-15).